A 305-amino-acid polypeptide reads, in one-letter code: Oxygen-dependent coproporphyrinogen-III oxidase (305 aa).

Ser-92 provides a ligand contact to substrate. Residues His-96 and His-106 each contribute to the a divalent metal cation site. His-106 acts as the Proton donor in catalysis. A substrate-binding site is contributed by 108 to 110 (NVR). Positions 145 and 175 each coordinate a divalent metal cation. Positions 239-274 (YVEFNLLFDRGTLFGLQSGGRAESILISLPPLVRWE) are important for dimerization. A substrate-binding site is contributed by 257-259 (GGR).

It belongs to the aerobic coproporphyrinogen-III oxidase family. As to quaternary structure, homodimer. A divalent metal cation serves as cofactor.

The protein localises to the cytoplasm. The enzyme catalyses coproporphyrinogen III + O2 + 2 H(+) = protoporphyrinogen IX + 2 CO2 + 2 H2O. Its pathway is porphyrin-containing compound metabolism; protoporphyrin-IX biosynthesis; protoporphyrinogen-IX from coproporphyrinogen-III (O2 route): step 1/1. Functionally, involved in the heme biosynthesis. Catalyzes the aerobic oxidative decarboxylation of propionate groups of rings A and B of coproporphyrinogen-III to yield the vinyl groups in protoporphyrinogen-IX. This chain is Oxygen-dependent coproporphyrinogen-III oxidase, found in Xylella fastidiosa (strain Temecula1 / ATCC 700964).